A 194-amino-acid chain; its full sequence is Fe/S biogenesis protein NfuA (194 aa).

Positions 152 and 155 each coordinate [4Fe-4S] cluster.

Belongs to the NfuA family. As to quaternary structure, homodimer. [4Fe-4S] cluster is required as a cofactor.

Its function is as follows. Involved in iron-sulfur cluster biogenesis. Binds a 4Fe-4S cluster, can transfer this cluster to apoproteins, and thereby intervenes in the maturation of Fe/S proteins. Could also act as a scaffold/chaperone for damaged Fe/S proteins. The protein is Fe/S biogenesis protein NfuA of Pseudomonas fluorescens (strain SBW25).